The sequence spans 233 residues: MTPHINAKIGDFYPQCLLCGDPLRVSYIAKKFLQDAKEITNVRNMLGFSGKYKGRGISLMGHGMGIASCTIYVTELIKTYQVKELLRIGTCGAISPKVGLKDIIMATGASTDSKTNRVRFLNHDLSATPDFELSLRAYQTAKRLGIDLKVGNVFSSDFFYSFETHAFDLMAKYNHLAIEMEAAGLYATAMELNAKALCLCSVSDHLITKEALSPKERVESFDNMIILALEMMS.

Position 4 (histidine 4) interacts with a purine D-ribonucleoside. Residues glycine 20, arginine 24, arginine 43, and arginine 87–threonine 90 each bind phosphate. Residues glutamate 179–glutamate 181 and serine 203–aspartate 204 each bind a purine D-ribonucleoside. Residue aspartate 204 is the Proton donor of the active site.

It belongs to the PNP/UDP phosphorylase family. In terms of assembly, homohexamer; trimer of homodimers.

The catalysed reaction is a purine D-ribonucleoside + phosphate = a purine nucleobase + alpha-D-ribose 1-phosphate. It catalyses the reaction a purine 2'-deoxy-D-ribonucleoside + phosphate = a purine nucleobase + 2-deoxy-alpha-D-ribose 1-phosphate. Its function is as follows. Catalyzes the reversible phosphorolytic breakdown of the N-glycosidic bond in the beta-(deoxy)ribonucleoside molecules, with the formation of the corresponding free purine bases and pentose-1-phosphate. The sequence is that of Purine nucleoside phosphorylase DeoD-type from Helicobacter pylori (strain ATCC 700392 / 26695) (Campylobacter pylori).